A 143-amino-acid polypeptide reads, in one-letter code: Large ribosomal subunit protein uL15 (143 aa).

Composition is skewed to basic residues over residues Met-1–Ser-14 and Lys-23–Gly-38. The interval Met-1–Gly-38 is disordered.

The protein belongs to the universal ribosomal protein uL15 family. As to quaternary structure, part of the 50S ribosomal subunit.

In terms of biological role, binds to the 23S rRNA. This is Large ribosomal subunit protein uL15 from Methanococcus maripaludis (strain DSM 14266 / JCM 13030 / NBRC 101832 / S2 / LL).